We begin with the raw amino-acid sequence, 504 residues long: Putative pentatricopeptide repeat-containing protein At3g28640 (504 aa).

9 PPR repeats span residues 77–107 (NSFV…MVKE), 115–149 (SYLT…GVFL), 151–181 (DSHV…IPQP), 182–216 (DVVK…GLEP), 217–251 (DEFS…SWIE), 253–287 (DVFV…NVFS), 288–319 (WAAL…GIKP), 320–350 (DSVV…MEAR), and 356–390 (KHEH…PLAS). A type E motif region spans residues 391–470 (VWGALLNGCR…TPGWSVLEVD (80 aa)). The interval 471–501 (GNVTKFVSGDVSHPNLLQIHTVIHLLSVDAL) is type E(+) motif.

The protein belongs to the PPR family. PCMP-E subfamily.

In Arabidopsis thaliana (Mouse-ear cress), this protein is Putative pentatricopeptide repeat-containing protein At3g28640 (PCMP-E79).